A 105-amino-acid polypeptide reads, in one-letter code: Flagellar transcriptional regulator FlhD (105 aa).

Belongs to the FlhD family. Homodimer; disulfide-linked. Forms a heterohexamer composed of two FlhC and four FlhD subunits. Each FlhC binds a FlhD dimer, forming a heterotrimer, and a hexamer assembles by dimerization of two heterotrimers.

Its subcellular location is the cytoplasm. In terms of biological role, functions in complex with FlhC as a master transcriptional regulator that regulates transcription of several flagellar and non-flagellar operons by binding to their promoter region. Activates expression of class 2 flagellar genes, including fliA, which is a flagellum-specific sigma factor that turns on the class 3 genes. Also regulates genes whose products function in a variety of physiological pathways. The polypeptide is Flagellar transcriptional regulator FlhD (Nitrosomonas eutropha (strain DSM 101675 / C91 / Nm57)).